We begin with the raw amino-acid sequence, 138 residues long: Transcription antitermination protein NusB (138 aa).

The protein belongs to the NusB family.

Its function is as follows. Involved in transcription antitermination. Required for transcription of ribosomal RNA (rRNA) genes. Binds specifically to the boxA antiterminator sequence of the ribosomal RNA (rrn) operons. This Colwellia psychrerythraea (strain 34H / ATCC BAA-681) (Vibrio psychroerythus) protein is Transcription antitermination protein NusB.